Reading from the N-terminus, the 1164-residue chain is Phospholipid-transporting ATPase IA (1164 aa).

The Cytoplasmic portion of the chain corresponds to 1-65; sequence MPTMRRTVSE…TAKYNIITFL (65 aa). The residue at position 25 (S25) is a Phosphoserine. T28 is modified (phosphothreonine). S29 is subject to Phosphoserine. A helical membrane pass occupies residues 66-86; it reads PRFLYSQFRRAANSFFLFIAL. Topologically, residues 87-92 are exoplasmic loop; sequence LQQIPD. The helical transmembrane segment at 93 to 115 threads the bilayer; it reads VSPTGRYTTLVPLLFILAVAAIK. The Cytoplasmic portion of the chain corresponds to 116–297; it reads EIIEDIKRHK…SNVERITNVQ (182 aa). Residues 298–319 form a helical membrane-spanning segment; it reads ILILFCILIAMSLVCSVGSAIW. Residues 320–344 lie on the Exoplasmic loop side of the membrane; it reads NRRHSGKDWYLNLNYGGASNFGLNF. A helical transmembrane segment spans residues 345-366; the sequence is LTFIILFNNLIPISLLVTLEVV. Topologically, residues 367–857 are cytoplasmic; sequence KFTQAYFINW…GAWNYNRVSK (491 aa). D409 functions as the 4-aspartylphosphate intermediate in the catalytic mechanism. 3 residues coordinate ATP: D409, K410, and T411. D409 lines the Mg(2+) pocket. A Mg(2+)-binding site is contributed by T411. Phosphoserine is present on S443. ATP is bound by residues E508, F549, K572, R605, T685, G686, D687, 741-748, R775, and K781; that span reads ALIIDGKT. D801 lines the Mg(2+) pocket. ATP-binding residues include N804 and D805. Mg(2+) is bound at residue D805. The helical transmembrane segment at 858–878 threads the bilayer; the sequence is CILYCFYKNIVLYIIEIWFAF. Topologically, residues 879-890 are exoplasmic loop; that stretch reads VNGFSGQILFER. The chain crosses the membrane as a helical span at residues 891-910; that stretch reads WCIGLYNVMFTAMPPLTLGI. Residues 911 to 940 are Cytoplasmic-facing; the sequence is FERSCRKENMLKYPELYKTSQNALDFNTKV. The chain crosses the membrane as a helical span at residues 941–962; the sequence is FWVHCLNGLFHSVILFWFPLKA. Topologically, residues 963–976 are exoplasmic loop; it reads LQYGTAFGNGKTSD. A helical transmembrane segment spans residues 977–999; it reads YLLLGNFVYTFVVITVCLKAGLE. Topologically, residues 1000 to 1005 are cytoplasmic; that stretch reads TSYWTW. Residues 1006–1026 form a helical membrane-spanning segment; that stretch reads FSHIAIWGSIALWVVFFGIYS. Topologically, residues 1027 to 1044 are exoplasmic loop; it reads SLWPAIPMAPDMSGEAAM. The helical transmembrane segment at 1045-1070 threads the bilayer; it reads LFSSGVFWMGLLFIPVASLLLDVVYK. The Cytoplasmic segment spans residues 1071–1164; it reads VIKRTAFKTL…DTTKQRPDEW (94 aa). 1095 to 1102 serves as a coordination point for ATP; sequence GAVVLGKS. The residue at position 1126 (S1126) is a Phosphoserine.

Belongs to the cation transport ATPase (P-type) (TC 3.A.3) family. Type IV subfamily. As to quaternary structure, component of a P4-ATPase flippase complex which consists of a catalytic alpha subunit and an accessory beta subunit. Interacts with TMEM30A to form a flippase complex; this complex forms an intermediate phosphoenzyme. Interacts with TMEM30B; this interaction is reported conflictingly. The cofactor is Mg(2+). Cleaved by calpain in a caspase- and calcium influx-dependent manner during platelet apoptosis leading to a 100 kDa polypeptide. As to expression, found in most adult tissues except liver, testis and placenta. Most abundant in heart, brain and skeletal muscle. Also detected in fetal tissues. Isoform 1 is only detected in brain, skeletal muscle and heart and is the most abundant form in skeletal muscle. Highly expressed in platelets.

The protein localises to the cytoplasmic vesicle. Its subcellular location is the secretory vesicle. The protein resides in the chromaffin granule membrane. It localises to the cytoplasmic granule. It is found in the cell membrane. The protein localises to the endoplasmic reticulum. Its subcellular location is the golgi apparatus. The catalysed reaction is ATP + H2O + phospholipidSide 1 = ADP + phosphate + phospholipidSide 2.. The enzyme catalyses a 1,2-diacyl-sn-glycero-3-phospho-L-serine(out) + ATP + H2O = a 1,2-diacyl-sn-glycero-3-phospho-L-serine(in) + ADP + phosphate + H(+). With respect to regulation, ATPase activity is stimulated by phosphatidylserine (PS) and minimally by phosphatidylethanolamine (PE). ATPase activity is inhibited by beryllium fluoride and aluminum trifluoride. Its function is as follows. Catalytic component of a P4-ATPase flippase complex which catalyzes the hydrolysis of ATP coupled to the transport of aminophospholipids from the outer to the inner leaflet of various membranes and ensures the maintenance of asymmetric distribution of phospholipids. Phospholipid translocation also seems to be implicated in vesicle formation and in uptake of lipid signaling molecules. In vitro, its ATPase activity is selectively and stereospecifically stimulated by phosphatidylserine (PS). The flippase complex ATP8A1:TMEM30A seems to play a role in regulation of cell migration probably involving flippase-mediated translocation of phosphatidylethanolamine (PE) at the cell membrane. Acts as aminophospholipid translocase at the cell membrane in neuronal cells. The protein is Phospholipid-transporting ATPase IA of Homo sapiens (Human).